A 247-amino-acid polypeptide reads, in one-letter code: Granulin (247 aa).

This sequence belongs to the polyhedrin family.

Functionally, component of the virus occlusion bodies, which are large proteinaceous structures, that protect the virus from the outside environment for extended periods until they are ingested by insect larvae. This is Granulin from Agrotis segetum granulosis virus (AsGV).